Reading from the N-terminus, the 380-residue chain is Transmembrane protein 229A (380 aa).

Residues 1–40 (MAGSDVDSEGPARRGGAARRPGAPGGPGSEAAAGCPEPLS) form a disordered region. The next 2 membrane-spanning stretches (helical) occupy residues 51–71 (LPAW…DVLV) and 117–137 (AFVF…TLAG). The tract at residues 188–236 (RQQQQQQQQQQQQRRGALPVPPGARVPTAAGARRRRPRGPRGAGGAPSQ) is disordered. The span at 190 to 202 (QQQQQQQQQQQRR) shows a compositional bias: low complexity. 4 helical membrane-spanning segments follow: residues 244–264 (FLFF…FFNV), 278–298 (LWSF…YFHL), 310–330 (VPIY…GLRT), and 343–363 (LNFM…LSVY).

It belongs to the TMEM229 family.

Its subcellular location is the membrane. In Homo sapiens (Human), this protein is Transmembrane protein 229A (TMEM229A).